The sequence spans 220 residues: Peptidoglycan hydrolase gp5 (220 aa).

This sequence belongs to the peptidase U40 family. In terms of assembly, monomer.

It localises to the virion. In terms of biological role, muralytic enzyme exposed to host peptidoglycan layer after membrane fusion during viral entry. Functions as an exolysin that cleaves the peptide bridge formed by meso-diaminopimelic acid and D-alanine. Also lyses the host cell late in infection to release the virions. In Pseudomonas savastanoi pv. phaseolicola (Pseudomonas syringae pv. phaseolicola), this protein is Peptidoglycan hydrolase gp5 (P5).